The primary structure comprises 133 residues: Ribonuclease VapC1 (133 aa).

Asp-7 and Asp-98 together coordinate Mg(2+).

The protein belongs to the PINc/VapC protein family. It depends on Mg(2+) as a cofactor.

Its function is as follows. Toxic component of a type II toxin-antitoxin (TA) system. The cognate antitoxin is VapB1. In Mycobacterium tuberculosis (strain CDC 1551 / Oshkosh), this protein is Ribonuclease VapC1.